We begin with the raw amino-acid sequence, 453 residues long: Bifunctional protein GlmU (453 aa).

The interval 1 to 225 (MHAHVILAAG…AEEALGVNTR (225 aa)) is pyrophosphorylase. UDP-N-acetyl-alpha-D-glucosamine is bound by residues 7 to 10 (LAAG), lysine 21, glutamine 72, and 77 to 78 (GT). Aspartate 102 is a binding site for Mg(2+). Glycine 138, glutamate 152, asparagine 167, and asparagine 223 together coordinate UDP-N-acetyl-alpha-D-glucosamine. Mg(2+) is bound at residue asparagine 223. Positions 226–246 (EELARVEGVLLRRLRAEWMGK) are linker. The interval 247-453 (GVRMILPETI…GYALRKLGEG (207 aa)) is N-acetyltransferase. Arginine 329 and lysine 347 together coordinate UDP-N-acetyl-alpha-D-glucosamine. Histidine 359 acts as the Proton acceptor in catalysis. UDP-N-acetyl-alpha-D-glucosamine contacts are provided by tyrosine 362 and asparagine 373. Acetyl-CoA is bound by residues alanine 376, 382-383 (NY), serine 401, alanine 419, and arginine 436.

The protein in the N-terminal section; belongs to the N-acetylglucosamine-1-phosphate uridyltransferase family. This sequence in the C-terminal section; belongs to the transferase hexapeptide repeat family. In terms of assembly, homotrimer. It depends on Mg(2+) as a cofactor.

The protein localises to the cytoplasm. It catalyses the reaction alpha-D-glucosamine 1-phosphate + acetyl-CoA = N-acetyl-alpha-D-glucosamine 1-phosphate + CoA + H(+). The catalysed reaction is N-acetyl-alpha-D-glucosamine 1-phosphate + UTP + H(+) = UDP-N-acetyl-alpha-D-glucosamine + diphosphate. It participates in nucleotide-sugar biosynthesis; UDP-N-acetyl-alpha-D-glucosamine biosynthesis; N-acetyl-alpha-D-glucosamine 1-phosphate from alpha-D-glucosamine 6-phosphate (route II): step 2/2. The protein operates within nucleotide-sugar biosynthesis; UDP-N-acetyl-alpha-D-glucosamine biosynthesis; UDP-N-acetyl-alpha-D-glucosamine from N-acetyl-alpha-D-glucosamine 1-phosphate: step 1/1. It functions in the pathway bacterial outer membrane biogenesis; LPS lipid A biosynthesis. Functionally, catalyzes the last two sequential reactions in the de novo biosynthetic pathway for UDP-N-acetylglucosamine (UDP-GlcNAc). The C-terminal domain catalyzes the transfer of acetyl group from acetyl coenzyme A to glucosamine-1-phosphate (GlcN-1-P) to produce N-acetylglucosamine-1-phosphate (GlcNAc-1-P), which is converted into UDP-GlcNAc by the transfer of uridine 5-monophosphate (from uridine 5-triphosphate), a reaction catalyzed by the N-terminal domain. The sequence is that of Bifunctional protein GlmU from Thermus thermophilus (strain ATCC 27634 / DSM 579 / HB8).